Here is a 218-residue protein sequence, read N- to C-terminus: Adenylate kinase (218 aa).

10–15 provides a ligand contact to ATP; the sequence is GAGKGT. The segment at 30–59 is NMP; sequence STGDMLRAAVKAATPLGLAAKKIMDEGGLV. Residues Thr-31, Arg-36, 57 to 59, 85 to 88, and Gln-92 contribute to the AMP site; these read GLV and GFPR. The segment at 122-159 is LID; that stretch reads GRRVHLASGRTYHVTFNPPAVPDKDDLTGEPLVQRNDD. ATP contacts are provided by residues Arg-123 and 132–133; that span reads TY. AMP is bound by residues Arg-156 and Arg-167. Gly-203 contacts ATP.

The protein belongs to the adenylate kinase family. In terms of assembly, monomer.

Its subcellular location is the cytoplasm. It carries out the reaction AMP + ATP = 2 ADP. Its pathway is purine metabolism; AMP biosynthesis via salvage pathway; AMP from ADP: step 1/1. In terms of biological role, catalyzes the reversible transfer of the terminal phosphate group between ATP and AMP. Plays an important role in cellular energy homeostasis and in adenine nucleotide metabolism. The chain is Adenylate kinase from Chlorobaculum tepidum (strain ATCC 49652 / DSM 12025 / NBRC 103806 / TLS) (Chlorobium tepidum).